Consider the following 665-residue polypeptide: mRNA cleavage and polyadenylation factor CLP1 (665 aa).

ATP-binding positions include Lys91 and Ser195–Ser200. Disordered stretches follow at residues Val218–Lys283 and Pro593–Glu615. Composition is skewed to basic and acidic residues over residues Lys219 to Pro238 and Gln598 to Tyr614.

It belongs to the Clp1 family. Clp1 subfamily. As to quaternary structure, component of a pre-mRNA cleavage factor complex. Interacts directly with PCF11.

The protein localises to the nucleus. Its function is as follows. Required for endonucleolytic cleavage during polyadenylation-dependent pre-mRNA 3'-end formation. This is mRNA cleavage and polyadenylation factor CLP1 from Malassezia globosa (strain ATCC MYA-4612 / CBS 7966) (Dandruff-associated fungus).